A 225-amino-acid polypeptide reads, in one-letter code: Interleukin-6 (225 aa).

An N-terminal signal peptide occupies residues 1-24 (MPSRLNVFWLCAAALAALLRCAPA). The N-linked (GlcNAc...) asparagine glycan is linked to asparagine 98.

This sequence belongs to the IL-6 superfamily. Component of a hexamer of two molecules each of IL6, IL6R and IL6ST; first binds to IL6R to associate with the signaling subunit IL6ST. Expressed in white muscle, skin, spleen, anterior intestine and stomach. Not expressed in brain, gill, head kidney, posterior intestine and adipose tissue.

It localises to the secreted. In terms of biological role, cytokine with a wide variety of biological functions in immunity, tissue regeneration, and metabolism. Binds to IL6R, then the complex associates to the signaling subunit IL6ST/gp130 to trigger the intracellular IL6-signaling pathway. The interaction with the membrane-bound IL6R and IL6ST stimulates 'classic signaling', whereas the binding of IL6 and soluble IL6R to IL6ST stimulates 'trans-signaling'. Alternatively, 'cluster signaling' occurs when membrane-bound IL6:IL6R complexes on transmitter cells activate IL6ST receptors on neighboring receiver cells. The chain is Interleukin-6 (il6) from Sparus aurata (Gilthead sea bream).